Here is a 242-residue protein sequence, read N- to C-terminus: UDP-2,3-diacylglucosamine hydrolase (242 aa).

Mn(2+) is bound by residues D8, H10, D41, N79, and H114. 79-80 (NR) provides a ligand contact to substrate. Substrate is bound by residues D122, K164, K167, and H195. Positions 195 and 197 each coordinate Mn(2+).

It belongs to the LpxH family. The cofactor is Mn(2+).

It localises to the cell inner membrane. It carries out the reaction UDP-2-N,3-O-bis[(3R)-3-hydroxytetradecanoyl]-alpha-D-glucosamine + H2O = 2-N,3-O-bis[(3R)-3-hydroxytetradecanoyl]-alpha-D-glucosaminyl 1-phosphate + UMP + 2 H(+). It participates in glycolipid biosynthesis; lipid IV(A) biosynthesis; lipid IV(A) from (3R)-3-hydroxytetradecanoyl-[acyl-carrier-protein] and UDP-N-acetyl-alpha-D-glucosamine: step 4/6. In terms of biological role, hydrolyzes the pyrophosphate bond of UDP-2,3-diacylglucosamine to yield 2,3-diacylglucosamine 1-phosphate (lipid X) and UMP by catalyzing the attack of water at the alpha-P atom. Involved in the biosynthesis of lipid A, a phosphorylated glycolipid that anchors the lipopolysaccharide to the outer membrane of the cell. This Vibrio cholerae serotype O1 (strain ATCC 39315 / El Tor Inaba N16961) protein is UDP-2,3-diacylglucosamine hydrolase.